The primary structure comprises 345 residues: MPKAYENAGVSVEAGYEVVKRIKSHVARTNRPGVVGGIGGFGGLFDLASLGYKEPVLISGTDGVGTKLMVAKLANKHDTIGIDCVAMCVNDIAAQGAEPLFFLDYIACGKNDPALLEQVVAGVADGCVQAGSALVGGETAEMPGMYDEDEYDLAGFSVGVAEKSAIVDGSTIAEGDVLIGLPSTGVHSNGFSLVRKALFEQAGYTVDTELDELGGEKLGDVLLTPTKIYVKALSPLFKAGVVKGVAHITGGGFIENIPRMIPDGLAAEIELGTWPVLPIFDVLEKAGNIDHKEMYNIFNMGIGMVLAIDPARKDEALKLLADNNEPAYVLGSITADTTGTQIVLK.

This sequence belongs to the AIR synthase family.

The protein resides in the cytoplasm. It carries out the reaction 2-formamido-N(1)-(5-O-phospho-beta-D-ribosyl)acetamidine + ATP = 5-amino-1-(5-phospho-beta-D-ribosyl)imidazole + ADP + phosphate + H(+). It functions in the pathway purine metabolism; IMP biosynthesis via de novo pathway; 5-amino-1-(5-phospho-D-ribosyl)imidazole from N(2)-formyl-N(1)-(5-phospho-D-ribosyl)glycinamide: step 2/2. The sequence is that of Phosphoribosylformylglycinamidine cyclo-ligase from Bifidobacterium longum (strain DJO10A).